The following is a 172-amino-acid chain: Phosphopantetheine adenylyltransferase (172 aa).

Position 13 (Thr-13) interacts with substrate. Residues 13-14 (TF) and His-21 each bind ATP. Lys-45, Leu-81, and Arg-95 together coordinate substrate. ATP is bound by residues 96–98 (GLR), Glu-106, and 131–137 (SQFISSR).

Belongs to the bacterial CoaD family. In terms of assembly, homohexamer. Mg(2+) is required as a cofactor.

It localises to the cytoplasm. The enzyme catalyses (R)-4'-phosphopantetheine + ATP + H(+) = 3'-dephospho-CoA + diphosphate. Its pathway is cofactor biosynthesis; coenzyme A biosynthesis; CoA from (R)-pantothenate: step 4/5. Its function is as follows. Reversibly transfers an adenylyl group from ATP to 4'-phosphopantetheine, yielding dephospho-CoA (dPCoA) and pyrophosphate. This chain is Phosphopantetheine adenylyltransferase, found in Rhodospirillum rubrum (strain ATCC 11170 / ATH 1.1.1 / DSM 467 / LMG 4362 / NCIMB 8255 / S1).